The sequence spans 493 residues: Mitochondrial distribution and morphology protein 10 (493 aa).

It belongs to the MDM10 family. As to quaternary structure, component of the ER-mitochondria encounter structure (ERMES) or MDM complex, composed of MMM1, MDM10, MDM12 and MDM34. Associates with the mitochondrial outer membrane sorting assembly machinery SAM(core) complex, which consists of SAM35, SAM37 and SAM50, to form a SAM(holo) complex.

It localises to the mitochondrion outer membrane. Its function is as follows. Component of the ERMES/MDM complex, which serves as a molecular tether to connect the endoplasmic reticulum and mitochondria. Components of this complex are involved in the control of mitochondrial shape and protein biogenesis and may function in phospholipid exchange. MDM10 is involved in the late assembly steps of the general translocase of the mitochondrial outer membrane (TOM complex). Functions in the TOM40-specific route of the assembly of outer membrane beta-barrel proteins, including the association of TOM40 with the receptor TOM22 and small TOM proteins. Can associate with the SAM(core) complex as well as the MDM12-MMM1 complex, both involved in late steps of the major beta-barrel assembly pathway, that is responsible for biogenesis of all outer membrane beta-barrel proteins. May act as a switch that shuttles between both complexes and channels precursor proteins into the TOM40-specific pathway. Plays a role in mitochondrial morphology and in the inheritance of mitochondria. This is Mitochondrial distribution and morphology protein 10 from Saccharomyces cerevisiae (strain ATCC 204508 / S288c) (Baker's yeast).